The following is a 312-amino-acid chain: Expansin-A24 (312 aa).

The N-terminal stretch at 1-27 (MELLKRKLYAKILMMVMVIWIAPMTNG) is a signal peptide. The disordered stretch occupies residues 31–86 (ASHVPGGRPGAHPSHGAHPAHGAHPSHGAHPSHGAHPSHGAHPSHGALPSHGGQVP). A compositionally biased stretch (low complexity) spans 40–77 (GAHPSHGAHPAHGAHPSHGAHPSHGAHPSHGAHPSHGA). A run of 6 repeats spans residues 42–47 (HPSHGA), 48–53 (HPAHGA), 54–59 (HPSHGA), 60–65 (HPSHGA), 66–71 (HPSHGA), and 72–77 (HPSHGA). The segment at 42 to 77 (HPSHGAHPAHGAHPSHGAHPSHGAHPSHGAHPSHGA) is 6 X 6 AA tandem repeats of H-P-S-H-G-A. Residues 108–218 (QGACGYGDLH…RRVPCAKIGG (111 aa)) form the Expansin-like EG45 domain. One can recognise an Expansin-like CBD domain in the interval 228–307 (HFLMILPYNV…DWKCNGQSFD (80 aa)).

The protein belongs to the expansin family. Expansin A subfamily.

It localises to the secreted. It is found in the cell wall. The protein localises to the membrane. Functionally, causes loosening and extension of plant cell walls by disrupting non-covalent bonding between cellulose microfibrils and matrix glucans. No enzymatic activity has been found. This Arabidopsis thaliana (Mouse-ear cress) protein is Expansin-A24 (EXPA24).